A 166-amino-acid polypeptide reads, in one-letter code: Regulatory protein RecX (166 aa).

The protein belongs to the RecX family.

Its subcellular location is the cytoplasm. Modulates RecA activity. This is Regulatory protein RecX from Salmonella paratyphi C (strain RKS4594).